Consider the following 1582-residue polypeptide: ATP-binding cassette sub-family C member 8 (1582 aa).

The Extracellular segment spans residues 1–30; that stretch reads MPLAFCGTENHSAAYRVDQGVLNNGCFVDA. Cys-6 and Cys-26 form a disulfide bridge. Asn-10 carries an N-linked (GlcNAc...) asparagine glycan. Residues 31–47 form a helical membrane-spanning segment; sequence LNVVPHVFLLFITFPIL. Over 48 to 72 the chain is Cytoplasmic; the sequence is FIGWGSQSSKVHIHHSTWLHFPGHN. The chain crosses the membrane as a helical span at residues 73 to 89; sequence LRWILTFILLFVLVCEI. The Extracellular portion of the chain corresponds to 90–106; it reads AEGILSDGVTESRHLHL. A helical membrane pass occupies residues 107–123; sequence YMPAGMAFMAAITSVVY. At 124–136 the chain is on the cytoplasmic side; the sequence is YHNIETSNFPKLL. The chain crosses the membrane as a helical span at residues 137–153; that stretch reads IALLIYWTLAFITKTIK. At 154 to 169 the chain is on the extracellular side; sequence FVKFYDHAIGFSQLRF. The chain crosses the membrane as a helical span at residues 170–186; sequence CLTGLLVILYGMLLLVE. Residues 187–303 are Cytoplasmic-facing; the sequence is VNVIRVRRYV…AFGRRLVLSS (117 aa). An ABC transmembrane type-1 1 domain is found at 299–602; the sequence is LVLSSTFRIL…LSSVVRSTVK (304 aa). Residues 304–319 form a helical membrane-spanning segment; the sequence is TFRILADLLGFAGPLC. The Extracellular portion of the chain corresponds to 320–356; sequence IFGIVDHLGKENHVFQPKTQFLGVYFVSSQEFLGNAY. A helical membrane pass occupies residues 357 to 372; the sequence is VLAVLLFLALLLQRTF. The Cytoplasmic segment spans residues 373–438; that stretch reads LQASYYVAIE…MWFFFLCPNL (66 aa). Residues 439–454 form a helical membrane-spanning segment; it reads WAMPVQIIVGVILLYY. The Extracellular segment spans residues 455 to 460; sequence ILGVSA. The helical transmembrane segment at 461 to 473 threads the bilayer; the sequence is LIGAAVIILLAPV. The Cytoplasmic segment spans residues 474-541; sequence QYFVATKLSQ…SLRAFAVYTS (68 aa). Residues 542-557 form a helical membrane-spanning segment; that stretch reads ISIFMNTAIPIAAVLI. Residues 558–576 are Extracellular-facing; it reads TFVGHVSFFKESDFSPSVA. Residues 577-592 traverse the membrane as a helical segment; that stretch reads FASLSLFHILVTPLFL. Residues 593–1013 are Cytoplasmic-facing; it reads LSSVVRSTVK…YLSSAGILLL (421 aa). One can recognise an ABC transporter 1 domain in the interval 679 to 930; sequence VQIIGGFFTW…ECQLFEHWKT (252 aa). ATP is bound by residues Trp-688, Gly-716, Ser-720, and Ser-721. Residue Ser-720 coordinates Mg(2+). The tract at residues 741-768 is disordered; the sequence is SSLPDSEGEDPSNPERETAADSDARSRG. Basic and acidic residues predominate over residues 753–766; it reads NPERETAADSDARS. Residue Gln-775 coordinates Mg(2+). Residues 939 to 950 show a composition bias toward basic and acidic residues; it reads LEKETVMERKAP. The interval 939-962 is disordered; the sequence is LEKETVMERKAPEPSQGLPRAMSS. One can recognise an ABC transmembrane type-1 2 domain in the interval 1013–1307; sequence LSLLVFSQLL…MVRNLADMEI (295 aa). The helical transmembrane segment at 1014-1031 threads the bilayer; that stretch reads SLLVFSQLLKHMVLVAID. The Extracellular portion of the chain corresponds to 1032 to 1067; sequence YWLAKWTDSALVLSPAARNCSLSQECALDQSVYAMV. Asn-1050 carries N-linked (GlcNAc...) asparagine glycosylation. The chain crosses the membrane as a helical span at residues 1068–1084; sequence FTVLCSLGIALCLVTSV. Over 1085 to 1143 the chain is Cytoplasmic; it reads TVEWTGLKVAKRLHRSLLNRIILAPMRFFETTPLGSILNRFSSDCNTIDQHIPSTLECL. Residues 1144 to 1161 traverse the membrane as a helical segment; that stretch reads SRSTLLCVSALAVISYVT. Position 1162 (Pro-1162) is a topological domain, extracellular. The chain crosses the membrane as a helical span at residues 1163–1175; the sequence is VFLVALLPLAVVC. Topologically, residues 1176-1249 are cytoplasmic; that stretch reads YFIQKYFRVA…FLTAANRWLE (74 aa). A helical membrane pass occupies residues 1250–1265; the sequence is VRMEYIGACVVLIAAA. Over 1266–1281 the chain is Extracellular; it reads TSISNSLHRELSAGLV. A helical transmembrane segment spans residues 1282–1297; sequence GLGLTYALMVSNYLNW. Over 1298–1582 the chain is Cytoplasmic; sequence MVRNLADMEI…VFASFVRADK (285 aa). Positions 1345-1579 constitute an ABC transporter 2 domain; sequence IQIQNLSVRY…KDSVFASFVR (235 aa). ADP contacts are provided by Thr-1381, Gly-1382, Gly-1384, Lys-1385, Ser-1386, and Ser-1387. ATP is bound at residue Ser-1483.

Belongs to the ABC transporter superfamily. ABCC family. Conjugate transporter (TC 3.A.1.208) subfamily. As to quaternary structure, forms an heterooctamer with KCNJ11; four ABCC8/SUR1 molecules interact with one KCNJ11 homotetramer.

The protein localises to the cell membrane. KATP channels are regulated by cytoplasmic ATP/ADP ratios; ATP inhibits the channel by closing the pore, while ADP activates the channel. Activated by phosphatidylinositol 4,5-biphosphate (PtdIns(4,5)P2). In terms of biological role, regulator subunit of pancreatic ATP-sensitive potassium channel (KATP), playing a major role in the regulation of insulin release. In pancreatic cells, it forms KATP channels with KCNJ11; KCNJ11 forms the channel pore while ABCC8 is required for activation and regulation. The polypeptide is ATP-binding cassette sub-family C member 8 (Abcc8) (Rattus norvegicus (Rat)).